Consider the following 215-residue polypeptide: Ribonuclease T (215 aa).

Residues 20–194 (VVIDVETAGF…YDTMQTAKLF (175 aa)) form the Exonuclease domain. Positions 23, 25, 181, and 186 each coordinate Mg(2+). The active-site Proton donor/acceptor is the His-181.

Belongs to the RNase T family. In terms of assembly, homodimer. Mg(2+) is required as a cofactor.

In terms of biological role, trims short 3' overhangs of a variety of RNA species, leaving a one or two nucleotide 3' overhang. Responsible for the end-turnover of tRNA: specifically removes the terminal AMP residue from uncharged tRNA (tRNA-C-C-A). Also appears to be involved in tRNA biosynthesis. The chain is Ribonuclease T from Yersinia enterocolitica serotype O:8 / biotype 1B (strain NCTC 13174 / 8081).